The following is a 221-amino-acid chain: MDHARLIESLVRRGIIKTEKVRRAAERVKRELFVPERYKEVAYEDIPLPIGDDQTISAPHMVFIMNEVLDLEEGQLVLEVGSGSGYHAATIAEIVAPSDSPPSRWGAVITVEINPRLASLAFENLSKAGYSSRVHVVNADGSSGLPLRRKVDRIVVTAAAPQIPPPLIEMLADGGKLVIPVGSPGFWGQDLLLVEKRGNNIIKKHITEVAFVPLRGRYGWS.

The active site involves Ser57.

It belongs to the methyltransferase superfamily. L-isoaspartyl/D-aspartyl protein methyltransferase family.

The protein localises to the cytoplasm. The catalysed reaction is [protein]-L-isoaspartate + S-adenosyl-L-methionine = [protein]-L-isoaspartate alpha-methyl ester + S-adenosyl-L-homocysteine. Functionally, catalyzes the methyl esterification of L-isoaspartyl residues in peptides and proteins that result from spontaneous decomposition of normal L-aspartyl and L-asparaginyl residues. It plays a role in the repair and/or degradation of damaged proteins. This chain is Protein-L-isoaspartate O-methyltransferase, found in Korarchaeum cryptofilum (strain OPF8).